A 25-amino-acid chain; its full sequence is Ocellatin-1 (25 aa).

Position 25 is a valine amide (V25).

Expressed by the skin dorsal glands.

The protein resides in the secreted. Functionally, has hemolytic activity against human erythrocytes and antibacterial activity against the Gram-negative bacterium E.coli. The polypeptide is Ocellatin-1 (Leptodactylus ocellatus (Argus frog)).